A 91-amino-acid polypeptide reads, in one-letter code: CRISPR-associated endoribonuclease Cas2 2 (91 aa).

Asp-6 provides a ligand contact to Mg(2+).

This sequence belongs to the CRISPR-associated endoribonuclease Cas2 protein family. In terms of assembly, homodimer, forms a heterotetramer with a Cas1 homodimer. It depends on Mg(2+) as a cofactor.

In terms of biological role, CRISPR (clustered regularly interspaced short palindromic repeat), is an adaptive immune system that provides protection against mobile genetic elements (viruses, transposable elements and conjugative plasmids). CRISPR clusters contain sequences complementary to antecedent mobile elements and target invading nucleic acids. CRISPR clusters are transcribed and processed into CRISPR RNA (crRNA). Functions as a ssRNA-specific endoribonuclease. Involved in the integration of spacer DNA into the CRISPR cassette. The chain is CRISPR-associated endoribonuclease Cas2 2 from Moorella thermoacetica (strain ATCC 39073 / JCM 9320).